The sequence spans 497 residues: Probable cytosol aminopeptidase (497 aa).

The Mn(2+) site is built by K267 and D272. K279 is an active-site residue. D290, D349, and E351 together coordinate Mn(2+). Residue R353 is part of the active site.

Belongs to the peptidase M17 family. Requires Mn(2+) as cofactor.

The protein localises to the cytoplasm. It carries out the reaction Release of an N-terminal amino acid, Xaa-|-Yaa-, in which Xaa is preferably Leu, but may be other amino acids including Pro although not Arg or Lys, and Yaa may be Pro. Amino acid amides and methyl esters are also readily hydrolyzed, but rates on arylamides are exceedingly low.. It catalyses the reaction Release of an N-terminal amino acid, preferentially leucine, but not glutamic or aspartic acids.. In terms of biological role, presumably involved in the processing and regular turnover of intracellular proteins. Catalyzes the removal of unsubstituted N-terminal amino acids from various peptides. The chain is Probable cytosol aminopeptidase from Pseudomonas putida (strain GB-1).